The sequence spans 155 residues: Ribonuclease H (155 aa).

Residues 4-145 (NISKVVIYTD…ADKLAAQGRQ (142 aa)) form the RNase H type-1 domain. Positions 13, 51, 73, and 137 each coordinate Mg(2+).

Belongs to the RNase H family. Monomer. The cofactor is Mg(2+).

Its subcellular location is the cytoplasm. The enzyme catalyses Endonucleolytic cleavage to 5'-phosphomonoester.. Endonuclease that specifically degrades the RNA of RNA-DNA hybrids. The sequence is that of Ribonuclease H from Rickettsia canadensis (strain McKiel).